Reading from the N-terminus, the 91-residue chain is N.vectensis toxin 8 (91 aa).

The N-terminal stretch at 1–26 is a signal peptide; that stretch reads MNSLLKVAVVCLVMLVACFVPRVILT. 3 disulfides stabilise this stretch: Cys45/Cys76, Cys47/Cys67, and Cys60/Cys77.

As to expression, expressed in ectodermal gland cells.

In terms of biological role, has toxic effects on zebrafish larvae. It causes contractile paralysis and twitching of the tail within 20 minutes, followed by death within 30 minutes. Does not show any toxicity when injected into arthropods (cherry shrimps or grass shrimps). The sequence is that of N.vectensis toxin 8 from Nematostella vectensis (Starlet sea anemone).